The chain runs to 1031 residues: Putative glycine dehydrogenase (decarboxylating), mitochondrial (1031 aa).

Residues 1 to 49 (MFDSFMKRNQLALIMFRACSKLQYHGVNTSLSRHLFLAKRNLSISSACL) constitute a mitochondrion transit peptide. Lysine 783 bears the N6-(pyridoxal phosphate)lysine mark.

This sequence belongs to the GcvP family. Pyridoxal 5'-phosphate serves as cofactor.

The protein resides in the mitochondrion. The enzyme catalyses N(6)-[(R)-lipoyl]-L-lysyl-[glycine-cleavage complex H protein] + glycine + H(+) = N(6)-[(R)-S(8)-aminomethyldihydrolipoyl]-L-lysyl-[glycine-cleavage complex H protein] + CO2. Its function is as follows. The glycine cleavage system catalyzes the degradation of glycine. The P protein binds the alpha-amino group of glycine through its pyridoxal phosphate cofactor; CO(2) is released and the remaining methylamine moiety is then transferred to the lipoamide cofactor of the H protein. The polypeptide is Putative glycine dehydrogenase (decarboxylating), mitochondrial (gcv2) (Schizosaccharomyces pombe (strain 972 / ATCC 24843) (Fission yeast)).